Here is a 517-residue protein sequence, read N- to C-terminus: GMP synthase [glutamine-hydrolyzing] (517 aa).

One can recognise a Glutamine amidotransferase type-1 domain in the interval 4-193 (KIIILDFGSQ…VVDICGGKQD (190 aa)). The active-site Nucleophile is cysteine 79. Catalysis depends on residues histidine 167 and glutamate 169. Residues 194-382 (WSAASFIETT…LGMPEHLITR (189 aa)) form the GMPS ATP-PPase domain. ATP is bound at residue 221–227 (SGGVDSS).

In terms of assembly, homodimer.

The enzyme catalyses XMP + L-glutamine + ATP + H2O = GMP + L-glutamate + AMP + diphosphate + 2 H(+). The protein operates within purine metabolism; GMP biosynthesis; GMP from XMP (L-Gln route): step 1/1. Its function is as follows. Catalyzes the synthesis of GMP from XMP. The chain is GMP synthase [glutamine-hydrolyzing] from Phocaeicola vulgatus (strain ATCC 8482 / DSM 1447 / JCM 5826 / CCUG 4940 / NBRC 14291 / NCTC 11154) (Bacteroides vulgatus).